A 261-amino-acid chain; its full sequence is MAATGALGSVLCVLTGASRGFGRTLAHLLCPRLLPGSTLLLVSRTEEALKGLAGELAHKYPGVRVRWEAADLGTSEGVSAAVRAAGELQVGAAQKLLIINNAGSIGDVSKMFVDFSDPKEVTDYMMFNVSSPLCLTASLLKTFPRRPDLQRVVVNVSSLAALQPFKSWALYCSGKAARDMIFRVLAEEEKDVRVLNYAPGPLDTDMHVVARTQTADPELRRFLMDRKEKGKMVDIQVSAKKMLDLLEADAYKSGDHIDFFD.

NADP(+) is bound by residues 16–22, 44–45, and 71–72; these read GASRGFG, RT, and DL. Substrate-binding positions include 158–159 and Y171; that span reads SL. K175 contacts NADP(+). Residue G200 coordinates substrate. 202–207 lines the NADP(+) pocket; it reads LDTDMH. D258 contacts substrate.

The protein belongs to the sepiapterin reductase family. As to quaternary structure, homodimer.

Its subcellular location is the cytoplasm. It carries out the reaction L-erythro-7,8-dihydrobiopterin + NADP(+) = L-sepiapterin + NADPH + H(+). The enzyme catalyses (6R)-L-erythro-5,6,7,8-tetrahydrobiopterin + 2 NADP(+) = 6-pyruvoyl-5,6,7,8-tetrahydropterin + 2 NADPH + 2 H(+). In terms of biological role, catalyzes the final one or two reductions in tetra-hydrobiopterin biosynthesis to form 5,6,7,8-tetrahydrobiopterin. The sequence is that of Sepiapterin reductase (spr) from Xenopus tropicalis (Western clawed frog).